The following is a 243-amino-acid chain: Sec-independent protein translocase protein TatC (243 aa).

Transmembrane regions (helical) follow at residues 18-38 (VIII…NYVD), 70-90 (IAII…IWSF), 106-126 (MIPV…FTVF), 132-152 (FLLQ…KYIS), 153-173 (FALN…VVYI), 191-211 (YALL…DVIS), and 213-233 (LLMA…AKFI).

It belongs to the TatC family. In terms of assembly, forms a complex with TatA.

It is found in the cell membrane. Part of the twin-arginine translocation (Tat) system that transports large folded proteins containing a characteristic twin-arginine motif in their signal peptide across membranes. This chain is Sec-independent protein translocase protein TatC, found in Carboxydothermus hydrogenoformans (strain ATCC BAA-161 / DSM 6008 / Z-2901).